A 215-amino-acid polypeptide reads, in one-letter code: MDTIHYMLDNAGYLASLTFQHLWLVALAVGLAIIIGVPLGVLIVRHKWLATPVLGAATLLLTIPSIALFGLMIPLFSLIGHGIGVLPAVTAVFLYSLLPIVRNTHTALDSLPPGLREAGRGIGMTFWQRLRWVEIPMALPVIFGGIRTAVVMNIGVMAIAAVIGAGGLGLLLLNGISGSDIRMLIAGALMICLLAIVLDWLLHRLQVVLTPKGIR.

The ABC transmembrane type-1 domain occupies 18–202; it reads TFQHLWLVAL…LLAIVLDWLL (185 aa). Helical transmembrane passes span 24 to 44, 51 to 73, 78 to 100, 132 to 152, 153 to 173, and 183 to 203; these read LVALAVGLAIIIGVPLGVLIV, TPVLGAATLLLTIPSIALFGLMI, LIGHGIGVLPAVTAVFLYSLLPI, WVEIPMALPVIFGGIRTAVVM, NIGVMAIAAVIGAGGLGLLLL, and MLIAGALMICLLAIVLDWLLH.

Belongs to the binding-protein-dependent transport system permease family. As to quaternary structure, the complex is composed of two ATP-binding proteins (OsmV), two transmembrane proteins (OsmW and OsmY) and a solute-binding protein (OsmX).

It localises to the cell inner membrane. Its function is as follows. Part of the OsmU ABC transporter complex, which is involved in the uptake of osmoprotectants such as choline-O-sulfate and glycine betaine. Probably responsible for the translocation of the substrate across the membrane. The chain is Osmoprotectant import permease protein OsmW (osmW) from Salmonella typhimurium (strain LT2 / SGSC1412 / ATCC 700720).